The chain runs to 490 residues: Transcription factor lin-26 (490 aa).

Disordered regions lie at residues 96-176 (KYKD…PLHQ), 236-262 (TPEYDDNHHSETISKASSEDLKTEPDS), and 302-326 (ASKPTTPASKRRNTDSNGAPSKKHR). Residues 101–110 (SSSPESPSTT) form a PEST region. The segment covering 101-120 (SSSPESPSTTASTAAQHTPP) has biased composition (low complexity). 2 stretches are compositionally biased toward polar residues: residues 123–132 (AVSTPTSINT) and 151–176 (NLSTKKVSPSSIEKQLQRTSHNPLHQ). Positions 236 to 260 (TPEYDDNHHSETISKASSEDLKTEP) are enriched in basic and acidic residues. The segment at 353 to 381 (YKCALCGKPTTLNSTGSRWNLLRHVIMIH) adopts a C2H2-type; degenerate zinc-finger fold.

As to expression, expressed in somatic gonads and germline precursors until the 50-cell stage. After the 100-cell stage, expression is seen in differentiating hypodermal and support cells (at protein level).

The protein resides in the nucleus. Its function is as follows. Probable transcription factor. Required to specify the fates of hypodermal and neuron-associated support cells. Functions during vulval development, playing a role in vulval precursor cell fate specification. Positively modulates expression of homeobox protein lin-39, perhaps by binding to regulatory regions of the lin-39 gene, acting in the vulval lineage. In Caenorhabditis elegans, this protein is Transcription factor lin-26.